A 172-amino-acid chain; its full sequence is Putative F-box protein At3g13825 (172 aa).

In terms of domain architecture, F-box spans 1–51; sequence MTTLSNLSVDLVGEIFSRVPLISLSEVRCTCTTWNTLSWNILSENYVFGKA.

The protein is Putative F-box protein At3g13825 of Arabidopsis thaliana (Mouse-ear cress).